The chain runs to 489 residues: Mitochondrial-processing peptidase subunit beta (489 aa).

Residues 1-45 (MAAAALSRTLLPEARRRLWGFTRRLPLRRAAAQPLYFGGDRLRST) constitute a mitochondrion transit peptide. His101 serves as a coordination point for Zn(2+). The Proton acceptor role is filled by Glu104. 2 residues coordinate Zn(2+): His105 and Glu181.

This sequence belongs to the peptidase M16 family. In terms of assembly, heterodimer of PMPCA (alpha) and PMPCB (beta) subunits, forming the mitochondrial processing protease (MPP) in which PMPCA is involved in substrate recognition and binding and PMPCB is the catalytic subunit. Zn(2+) is required as a cofactor.

The protein localises to the mitochondrion matrix. The enzyme catalyses Release of N-terminal transit peptides from precursor proteins imported into the mitochondrion, typically with Arg in position P2.. Its activity is regulated as follows. Binding to PMPCA is required for catalytic activity. Catalytic subunit of the essential mitochondrial processing protease (MPP), which cleaves the mitochondrial sequence off newly imported precursors proteins. Preferentially, cleaves after an arginine at position P2. Required for PINK1 turnover by coupling PINK1 mitochondrial import and cleavage, which results in subsequent PINK1 proteolysis. In Mus musculus (Mouse), this protein is Mitochondrial-processing peptidase subunit beta (Pmpcb).